Here is a 363-residue protein sequence, read N- to C-terminus: tRNA N6-adenosine threonylcarbamoyltransferase (363 aa).

The Fe cation site is built by His-121 and His-125. Residues 143 to 147 (LASGG), Asp-176, Gly-189, and Asn-287 each bind substrate. Asp-315 provides a ligand contact to Fe cation.

This sequence belongs to the KAE1 / TsaD family. Fe(2+) serves as cofactor.

The protein resides in the cytoplasm. It carries out the reaction L-threonylcarbamoyladenylate + adenosine(37) in tRNA = N(6)-L-threonylcarbamoyladenosine(37) in tRNA + AMP + H(+). In terms of biological role, required for the formation of a threonylcarbamoyl group on adenosine at position 37 (t(6)A37) in tRNAs that read codons beginning with adenine. Is involved in the transfer of the threonylcarbamoyl moiety of threonylcarbamoyl-AMP (TC-AMP) to the N6 group of A37, together with TsaE and TsaB. TsaD likely plays a direct catalytic role in this reaction. In Rhodopseudomonas palustris (strain HaA2), this protein is tRNA N6-adenosine threonylcarbamoyltransferase.